Consider the following 550-residue polypeptide: uncharacterized protein (550 aa).

The N-terminal stretch at 1–13 is a signal peptide; the sequence is MAGALFEPSFAAA. Residues 312 to 358 form a disordered region; sequence DAQPDPHLSGDEPPSRPLTPETTLFEALTPDPEPDPPATHAPAELIT.

To M.tuberculosis Rv3776.

This is an uncharacterized protein from Mycobacterium tuberculosis (strain CDC 1551 / Oshkosh).